We begin with the raw amino-acid sequence, 252 residues long: MSVSPVSIVSTPVAVSASPAGSPDQPAPPVTVRWRGVETYEASFDAMRAFTDARTADTGDEIWLVEHPPVYTLGQAGDPSHLLVADSGVPLVKVDRGGQITYHGPGQIVAYLLLDLRRRKLMVRTLVTKIEEAVIETLAAYNLASVRKAGAPGIYVASGVHEGAKIAALGLKIRNGCSYHGLSLNVKMDLRPFLAINPCGYAGLETVDMASLEVAADWNDVAHTLVRRLIANLDGASAAADKPQALEQHSND.

The BPL/LPL catalytic domain maps to 56–237 (ADTGDEIWLV…RLIANLDGAS (182 aa)). Residues 96-103 (RGGQITYH), 168-170 (ALG), and 181-183 (GLS) each bind substrate. Cys199 functions as the Acyl-thioester intermediate in the catalytic mechanism.

It belongs to the LipB family.

Its subcellular location is the cytoplasm. It carries out the reaction octanoyl-[ACP] + L-lysyl-[protein] = N(6)-octanoyl-L-lysyl-[protein] + holo-[ACP] + H(+). It functions in the pathway protein modification; protein lipoylation via endogenous pathway; protein N(6)-(lipoyl)lysine from octanoyl-[acyl-carrier-protein]: step 1/2. Functionally, catalyzes the transfer of endogenously produced octanoic acid from octanoyl-acyl-carrier-protein onto the lipoyl domains of lipoate-dependent enzymes. Lipoyl-ACP can also act as a substrate although octanoyl-ACP is likely to be the physiological substrate. The protein is Octanoyltransferase of Burkholderia lata (strain ATCC 17760 / DSM 23089 / LMG 22485 / NCIMB 9086 / R18194 / 383).